The primary structure comprises 111 residues: Probable 4-amino-4-deoxy-L-arabinose-phosphoundecaprenol flippase subunit ArnE (111 aa).

Over 1–37 (MIWLTLVFASLLSVAGQLCQKQATCFVAINKRRKHIA) the chain is Cytoplasmic. A helical transmembrane segment spans residues 38 to 58 (LWLGLALACLGLAMVLWLLVL). The EamA domain maps to 40 to 109 (LGLALACLGL…IIGGIVILGS (70 aa)). The Periplasmic portion of the chain corresponds to 59–60 (QN). The helical transmembrane segment at 61–81 (VPVGIAYPMLSLNFVWVTLAA) threads the bilayer. Topologically, residues 82-87 (VKLWHE) are cytoplasmic. The chain crosses the membrane as a helical span at residues 88–108 (PVSPRHWCGVAFIIGGIVILG). At 109 to 111 (STV) the chain is on the periplasmic side.

Belongs to the ArnE family. In terms of assembly, heterodimer of ArnE and ArnF.

Its subcellular location is the cell inner membrane. It functions in the pathway bacterial outer membrane biogenesis; lipopolysaccharide biosynthesis. Its function is as follows. Translocates 4-amino-4-deoxy-L-arabinose-phosphoundecaprenol (alpha-L-Ara4N-phosphoundecaprenol) from the cytoplasmic to the periplasmic side of the inner membrane. This chain is Probable 4-amino-4-deoxy-L-arabinose-phosphoundecaprenol flippase subunit ArnE, found in Escherichia coli (strain 55989 / EAEC).